The primary structure comprises 2146 residues: MEDLHRLYLFGDQTISCDEGLRNLLQAKNHTIVASFIERCFHALRQEITRLPPSQRTLFPRFTSIADLLAQHRESGTNPALGSALTCIYQLGCFIDYHGDRGHPYPSSDDGLLGSCTGMLSCTAVSSCKNVGELLPLAVEIVRLTIHLGLCVMRVREMVDSTESSSGSWSILVSEINEADATSLIGNFVKKRGIPPSSQPYISAVGSKGLTISAPPEILDNFIEEGLPKEYKHFKAPGVSGPYHAPHLYNDREIRNILSFCSEDVILRHTPRVPLVSSNTGKLVQVKSMRDLLKVALEEILLRKICWDKVTESCLSIVQATNDKPWRILPIASNATQGLVTALQRMGNCQIEVDTGVGAPQMDPAAPNATGNASRSKIAIIGMSGRFPEADGIEAFWDLLYKGLDVHKKVPPERWDVDAHVDLTGTKRNTSKVPYGCWINEPGLFDARFFNMSPREALQADPAQRLALLSAYEALEMAGFVPNSSPSTQRDRVGIFMGMTSDDYREINSGQDIDTYFIPGGNRAFTPGRINYYFKFSGPSVSVDTACSSSLAAIHLACNAIWRNDCDTAISGGVNLLTNPDNHAGLDRGHFLSRTGNCNTFDDGADGYCRADGVGTIVLKRLEDAEADNDPILGVINAAYTNHSAEAVSITRPHVGAQAFIFNKLLNDTNTNPHEIGYVEMHGTGTQAGDAVEMQSVLDVFAPDYRRGPANSLYLGSAKSNIGHGESASGVTSLVKVLLMLKQNMIPPHCGIKTKINHNFPTDLAQRNVHIAFKPTPWNRPVSGKRKMFINNFSAAGGNTALLMEDAPLREITGQDPRNVHVVSVTARSQTALKRNINALIKYINTHAPSSPANERRFLASLAYTTTARRMHHPFRVTAVGSSVKDIREVLRQRADQDVTTPVPATAPKTGFVFTGQGAQYTGMGKQLYEDCATFRSTIHRLDCIAQSQGFPSILPLIDGSMPVEELSPVVTQLGTTCLQMALVDYWKGLGVTPAFVLGHSLGDYAALNSAGVLSTSDTIYLCGRRAQLLTQQCQMGTHAMLAVKAAVSEIQHLLDPDVHAVACINGPTETVISGLSGRIDELAQQCSSQNLKSTKLKVPFAFHSAQVDPILESFEESAQGVIFHEPAVPFVSALNGEVITESNYSVLGPTYMVKHCREAVNFLGALEATRHAKLMDDATLWVEVGSHPICSGMIKSTFGPQATTVPSLRRDDDPWKILSNSLSTLHLAGVELNWKEFHQDFSSAHEVLELPRYGWDLKNYWIPYTNNFCLTKGGPVTAEVSAPKSTFLTTAAQKIVECREDGNTATLVVENNIAEPELNRVIQGHKVNGVALTPSSLYADIAQTLVDHLITKYKPEYQGLGLDVCDMTVPKPLIAKSGDQFFRVSAVMSWAEQKASVQVWSVNGDGKKMAEHAHCTVKLFNCAERETEWKRNSYLIKRSVSLLQDKAQTGEAHRMQRGMVYKLFAALVDYDENFKAIQEVILDSNEHEATARVKFQAPPGNFHRNPFWIDSFGHLSGFIMNASDATDSKNQVFVNHGWDSMRCLKKFSGDATYQTYVKMQPWKDSIWAGDVYVFEGDDIIAVYGGVKFQALARKILDTVLPPIGGSKTVGAPAPAPARPIGEKKAPPPIKVTGPPKPNPSNARAASPVVARALEILAAEVGLSEAEMTDSLNFADYGVDSLLSLTVTGRYREELNLDLESSVFMDYPTIKDFKAYLAEKGFCDSSSPEPSSEPESKFSFNSDASSEASSGLTTPGITSPVKHEAPKGGQNKVWKSICSIIAEEIGVSVGDIDPSDNLPEMGMDSLLSLTVLGRIRETLGMDLPAEFFLENPTLDAVQAALDLKPKMVPAATPVSEPIRLLETIDNTKPKTSRHPPATSILLQGNPHTATKKLFMFPDGSGSASSYATIPALSPDVCVYGLNCPYMKTPQNLTCSLDELTEPYLAEIRRRQPKGPYSFGGWSAGGICAFDAARQLILEEGEEVERLLLLDSPFPIGLEKLPPRLYKFFNSIGLFGDGKRAPPDWLLPHFLAFIDSLDAYKAVPLPFNDSKWAKKMPKTYLIWAKDGVCGKPGDPRPEPAEDGSEDPREMQWLLNDRTDLGPNKWDTLVGPQNIGGIHVMEDANHFTMTTGQKAKELSQFMATAMSS.

Residues 8 to 244 form an N-terminal acylcarrier protein transacylase domain (SAT) region; that stretch reads YLFGDQTISC…KAPGVSGPYH (237 aa). The Ketosynthase family 3 (KS3) domain maps to 375–806; it reads RSKIAIIGMS…GGNTALLMED (432 aa). Residues Cys-547, His-682, and His-724 each act as for beta-ketoacyl synthase activity in the active site. A malonyl-CoA:ACP transacylase (MAT) domain region spans residues 911–1232; sequence GFVFTGQGAQ…LSTLHLAGVE (322 aa). The For acyl/malonyl transferase activity role is filled by Ser-1001. The product template (PT) domain stretch occupies residues 1290-1602; sequence TTAAQKIVEC…ARKILDTVLP (313 aa). The tract at residues 1294–1427 is N-terminal hotdog fold; the sequence is QKIVECREDG…VKLFNCAERE (134 aa). The region spanning 1294–1598 is the PKS/mFAS DH domain; that stretch reads QKIVECREDG…FQALARKILD (305 aa). The Proton acceptor; for dehydratase activity role is filled by His-1326. The C-terminal hotdog fold stretch occupies residues 1453-1598; that stretch reads AHRMQRGMVY…FQALARKILD (146 aa). Asp-1511 functions as the Proton donor; for dehydratase activity in the catalytic mechanism. A disordered region spans residues 1611 to 1644; sequence GAPAPAPARPIGEKKAPPPIKVTGPPKPNPSNAR. Residues 1627 to 1639 show a composition bias toward pro residues; that stretch reads PPPIKVTGPPKPN. In terms of domain architecture, Carrier 1 spans 1647-1721; it reads SPVVARALEI…DFKAYLAEKG (75 aa). Ser-1681 carries the O-(pantetheine 4'-phosphoryl)serine modification. The disordered stretch occupies residues 1724–1769; sequence DSSSPEPSSEPESKFSFNSDASSEASSGLTTPGITSPVKHEAPKGG. Over residues 1738-1750 the composition is skewed to low complexity; the sequence is FSFNSDASSEASS. The Carrier 2 domain maps to 1768-1845; sequence GGQNKVWKSI…AVQAALDLKP (78 aa). Ser-1805 is modified (O-(pantetheine 4'-phosphoryl)serine). A claisen cyclase domain region spans residues 1892–2019; it reads KLFMFPDGSG…SIGLFGDGKR (128 aa). The active-site For Claisen cyclase activity is the Ser-1962.

It is found in the endosome. The catalysed reaction is 6 malonyl-CoA + acetyl-CoA + 6 H(+) = naphtopyrone YWA1 + 6 CO2 + 7 CoA + H2O. Its pathway is pigment biosynthesis; melanin biosynthesis. Its function is as follows. Non-reducing polyketide synthase; part of the gene cluster that mediates the biosynthesis of dihydroxynaphthalene (DHN)-melanin, a bluish-green pigment and a structural component of the conidial wall. The first step of the pathway is the production of the heptaketide naphtopyrone YWA1 by the polyketide synthase alb1 though condensation of acetyl-CoA with malonyl-CoA. The naphtopyrone YWA1 is then converted to the pentaketide 1,3,6,8-tetrahydroxynaphthalene (1,3,6,8-THN) by the heptaketide hydrolyase ayg1 though chain-length shortening. 1,3,6,8-THN is substrate of the hydroxynaphthalene reductase arp2 to yield scytalone. The scytalone dehydratase arp1 then reduces scytalone to 1,3,8-THN. 1,3,8-THN is also substrate of the hydroxynaphthalene reductase arp2 to yield vermelone. Vermelone is further converted by the multicopper oxidase abr1 to 1,8-DHN. Finally the laccase abr2 transforms 1,8-DHN to DHN-melanin. DHN-melanin biosynthesis appears to be initiated in endosomes where early enzymes (abl1, ayg1, arp1 and arp2) localize, with exocytosis leading to melanin deposition on the cell surface where late enzymes (abr1 and abr2) localize. DHN-melanin is an important structural component of the outer cell wall and is required for the presence of conidial surface hydrophobins. DHN-melanin also plays a crucial role in fungal virulence, including a protective role against the host's immune defenses. DHN-melanin protects also conidia against amoeba predation. The sequence is that of Conidial pigment polyketide synthase alb1 from Aspergillus fumigatus (strain ATCC MYA-4609 / CBS 101355 / FGSC A1100 / Af293) (Neosartorya fumigata).